The chain runs to 315 residues: Phosphatidylglycerol--prolipoprotein diacylglyceryl transferase (315 aa).

2 consecutive transmembrane segments (helical) span residues 19–39 and 93–113; these read FTIH…VWIL and VWEG…VAFL. Arginine 141 contributes to the a 1,2-diacyl-sn-glycero-3-phospho-(1'-sn-glycerol) binding site. 2 consecutive transmembrane segments (helical) span residues 188-208 and 256-276; these read LFHP…ALII and MWTA…LYQY.

The protein belongs to the Lgt family.

The protein resides in the cell membrane. It catalyses the reaction L-cysteinyl-[prolipoprotein] + a 1,2-diacyl-sn-glycero-3-phospho-(1'-sn-glycerol) = an S-1,2-diacyl-sn-glyceryl-L-cysteinyl-[prolipoprotein] + sn-glycerol 1-phosphate + H(+). It participates in protein modification; lipoprotein biosynthesis (diacylglyceryl transfer). Catalyzes the transfer of the diacylglyceryl group from phosphatidylglycerol to the sulfhydryl group of the N-terminal cysteine of a prolipoprotein, the first step in the formation of mature lipoproteins. The protein is Phosphatidylglycerol--prolipoprotein diacylglyceryl transferase of Bifidobacterium longum subsp. infantis (strain ATCC 15697 / DSM 20088 / JCM 1222 / NCTC 11817 / S12).